A 24-amino-acid polypeptide reads, in one-letter code: Ascaphin-6 (24 aa).

In terms of tissue distribution, expressed by the skin glands.

It localises to the secreted. In terms of biological role, antimicrobial peptide that shows higher potency against Gram-negative bacteria than against Gram-positive bacteria. Has a very week hemolytic activity. The polypeptide is Ascaphin-6 (Ascaphus truei (Coastal tailed frog)).